Reading from the N-terminus, the 449-residue chain is HSPB1-associated protein 1 homolog (449 aa).

The region spanning 102-266 (WAYADYKYIA…DEARVAEALT (165 aa)) is the JmjC domain. The span at 385–395 (DQDKLRSDNKL) shows a compositional bias: basic and acidic residues. The segment at 385–416 (DQDKLRSDNKLGQRSGQSVLQDTENPGGSGEM) is disordered. Residues 396–410 (GQRSGQSVLQDTENP) show a composition bias toward polar residues.

Its subcellular location is the cytoplasm. May play a role in cellular stress response. The sequence is that of HSPB1-associated protein 1 homolog (hspbap1) from Danio rerio (Zebrafish).